A 472-amino-acid chain; its full sequence is Serine incorporator 3 (472 aa).

Residues 1–95 (MGAVLGVFSL…KECDVLVRYK (95 aa)) lie on the Extracellular side of the membrane. The N-linked (GlcNAc...) asparagine glycan is linked to N34. The chain crosses the membrane as a helical span at residues 96–116 (AVYRISFALAVFFFAFSLLML). At 117–131 (NVKTSKDPRAAIHNG) the chain is on the cytoplasmic side. Residues 132 to 152 (FWFFKIAAIVGVMVGSFYIPG) traverse the membrane as a helical segment. The Extracellular portion of the chain corresponds to 153–158 (GHFNTA). A helical membrane pass occupies residues 159–179 (WFVIGMVGAAFFILIQLVLLV). Residues 180–202 (DFAHSWNESWVNRMEEGNPKCWY) lie on the Cytoplasmic side of the membrane. The chain crosses the membrane as a helical span at residues 203-223 (AALLSVTSLFYILSIIFAGLL). The Extracellular segment spans residues 224–238 (YTYYTKPDGCTENKF). Residues 239-259 (FISFNLILCVVISVLSIHPKI) traverse the membrane as a helical segment. Over 260-328 (QEHQPRSGLL…APTPAVPLQS (69 aa)) the chain is Cytoplasmic. The chain crosses the membrane as a helical span at residues 329–349 (GPSLNKENFIGLLVFVLSLSY). The Extracellular segment spans residues 350 to 405 (SSIRNSSNSQVSKLTLSGSDSVILRDTAANGASDEEDGRPRRAVDNEREGVQYNYS). N-linked (GlcNAc...) asparagine glycosylation occurs at N354. S370 is subject to Phosphoserine. A glycan (N-linked (GlcNAc...) asparagine) is linked at N403. Residues 406–426 (MFHLMLCSASLYIMMTLTNWY) form a helical membrane-spanning segment. At 427–445 (SPDANFQSMTSKWPAVWVK) the chain is on the cytoplasmic side. Residues 446–466 (ISSSWVCLLLYVWTLVAPLVL) traverse the membrane as a helical segment. The Extracellular segment spans residues 467–472 (TNRDFS).

This sequence belongs to the TDE1 family. In terms of processing, N-glycosylated.

Its subcellular location is the cell membrane. It is found in the golgi apparatus membrane. It catalyses the reaction a 1,2-diacyl-sn-glycero-3-phospho-L-serine(in) = a 1,2-diacyl-sn-glycero-3-phospho-L-serine(out). It carries out the reaction a 1,2-diacyl-sn-glycero-3-phosphocholine(in) = a 1,2-diacyl-sn-glycero-3-phosphocholine(out). The enzyme catalyses a 1,2-diacyl-sn-glycero-3-phosphoethanolamine(in) = a 1,2-diacyl-sn-glycero-3-phosphoethanolamine(out). Functionally, restriction factor required to restrict infectivity of gammaretroviruses: acts by inhibiting an early step of viral infection. Impairs the penetration of the viral particle into the cytoplasm. Non-ATP-dependent, non-specific lipid transporter for phosphatidylserine, phosphatidylcholine, and phosphatidylethanolamine. Functions as a scramblase that flips lipids in both directions across the membrane. Phospholipid scrambling results in gammaretroviral surface exposure of phosphatidylserine and loss of membrane asymmetry, which leads to loss of infectivity. The chain is Serine incorporator 3 (SERINC3) from Bos taurus (Bovine).